Here is a 182-residue protein sequence, read N- to C-terminus: Protein Syd (182 aa).

The protein belongs to the Syd family.

The protein localises to the cell inner membrane. Interacts with the SecY protein in vivo. May bind preferentially to an uncomplexed state of SecY, thus functioning either as a chelating agent for excess SecY in the cell or as a regulatory factor that negatively controls the translocase function. The polypeptide is Protein Syd (Aeromonas hydrophila subsp. hydrophila (strain ATCC 7966 / DSM 30187 / BCRC 13018 / CCUG 14551 / JCM 1027 / KCTC 2358 / NCIMB 9240 / NCTC 8049)).